The following is a 173-amino-acid chain: Co-chaperone protein HscB (173 aa).

Residues 2-74 form the J domain; that stretch reads DYFTLFGLPA…LKRAEYMLSL (73 aa).

The protein belongs to the HscB family. As to quaternary structure, interacts with HscA and stimulates its ATPase activity. Interacts with IscU.

Co-chaperone involved in the maturation of iron-sulfur cluster-containing proteins. Seems to help targeting proteins to be folded toward HscA. This is Co-chaperone protein HscB from Photorhabdus laumondii subsp. laumondii (strain DSM 15139 / CIP 105565 / TT01) (Photorhabdus luminescens subsp. laumondii).